The following is a 29-amino-acid chain: MDMVSLAWAALMVVFTFSLSLVVWGRSGL.

The helical transmembrane segment at 3-23 (MVSLAWAALMVVFTFSLSLVV) threads the bilayer.

Belongs to the PetN family. As to quaternary structure, the 4 large subunits of the cytochrome b6-f complex are cytochrome b6, subunit IV (17 kDa polypeptide, PetD), cytochrome f and the Rieske protein, while the 4 small subunits are PetG, PetL, PetM and PetN. The complex functions as a dimer.

It localises to the plastid. The protein resides in the chloroplast thylakoid membrane. Its function is as follows. Component of the cytochrome b6-f complex, which mediates electron transfer between photosystem II (PSII) and photosystem I (PSI), cyclic electron flow around PSI, and state transitions. This chain is Cytochrome b6-f complex subunit 8, found in Cucumis sativus (Cucumber).